The primary structure comprises 501 residues: Aspartate--tRNA ligase, cytoplasmic (501 aa).

Threonine 52 carries the post-translational modification Phosphothreonine. N6-acetyllysine is present on lysine 74. Glutamate 229 contributes to the L-aspartate binding site. Serine 249 is subject to Phosphoserine. An aspartate region spans residues 251–254; that stretch reads QLYK. Arginine 273 serves as a coordination point for L-aspartate. Residues 273–275 and 281–283 each bind ATP; these read RAE and RHL. Lysine 374 carries the post-translational modification N6-acetyllysine. Glutamate 424 contacts ATP. Residues serine 427 and arginine 431 each coordinate L-aspartate. 472–475 is an ATP binding site; it reads GLER.

The protein belongs to the class-II aminoacyl-tRNA synthetase family. Type 2 subfamily. Homodimer. Part of a multisubunit complex that groups tRNA ligases for Arg (RARS1), Asp (DARS1), Gln (QARS1), Ile (IARS1), Leu (LARS1), Lys (KARS1), Met (MARS1) the bifunctional ligase for Glu and Pro (EPRS1) and the auxiliary subunits AIMP1/p43, AIMP2/p38 and EEF1E1/p18.

Its subcellular location is the cytoplasm. The catalysed reaction is tRNA(Asp) + L-aspartate + ATP = L-aspartyl-tRNA(Asp) + AMP + diphosphate. Its function is as follows. Catalyzes the specific attachment of an amino acid to its cognate tRNA in a 2 step reaction: the amino acid (AA) is first activated by ATP to form AA-AMP and then transferred to the acceptor end of the tRNA. The polypeptide is Aspartate--tRNA ligase, cytoplasmic (Dars1) (Rattus norvegicus (Rat)).